A 145-amino-acid chain; its full sequence is 3-dehydroquinate dehydratase (145 aa).

The Proton acceptor role is filled by Tyr24. Substrate is bound by residues Asn75, His81, and Asp88. His101 (proton donor) is an active-site residue. Substrate-binding positions include Ile102–Ser103 and Arg112.

This sequence belongs to the type-II 3-dehydroquinase family. In terms of assembly, homododecamer.

The catalysed reaction is 3-dehydroquinate = 3-dehydroshikimate + H2O. It functions in the pathway metabolic intermediate biosynthesis; chorismate biosynthesis; chorismate from D-erythrose 4-phosphate and phosphoenolpyruvate: step 3/7. Functionally, catalyzes a trans-dehydration via an enolate intermediate. In Rhizobium johnstonii (strain DSM 114642 / LMG 32736 / 3841) (Rhizobium leguminosarum bv. viciae), this protein is 3-dehydroquinate dehydratase.